A 388-amino-acid polypeptide reads, in one-letter code: Dual-specificity RNA methyltransferase RlmN (388 aa).

Glu-109 functions as the Proton acceptor in the catalytic mechanism. The 240-residue stretch at 115-354 folds into the Radical SAM core domain; that stretch reads EEDRATLCVS…TIVRKTRGDD (240 aa). Cys-122 and Cys-359 are oxidised to a cystine. [4Fe-4S] cluster contacts are provided by Cys-129, Cys-133, and Cys-136. S-adenosyl-L-methionine is bound by residues 183 to 184, Ser-215, 237 to 239, and Asn-316; these read GE and SLH. The active-site S-methylcysteine intermediate is the Cys-359.

It belongs to the radical SAM superfamily. RlmN family. It depends on [4Fe-4S] cluster as a cofactor.

The protein localises to the cytoplasm. It catalyses the reaction adenosine(2503) in 23S rRNA + 2 reduced [2Fe-2S]-[ferredoxin] + 2 S-adenosyl-L-methionine = 2-methyladenosine(2503) in 23S rRNA + 5'-deoxyadenosine + L-methionine + 2 oxidized [2Fe-2S]-[ferredoxin] + S-adenosyl-L-homocysteine. It carries out the reaction adenosine(37) in tRNA + 2 reduced [2Fe-2S]-[ferredoxin] + 2 S-adenosyl-L-methionine = 2-methyladenosine(37) in tRNA + 5'-deoxyadenosine + L-methionine + 2 oxidized [2Fe-2S]-[ferredoxin] + S-adenosyl-L-homocysteine. In terms of biological role, specifically methylates position 2 of adenine 2503 in 23S rRNA and position 2 of adenine 37 in tRNAs. m2A2503 modification seems to play a crucial role in the proofreading step occurring at the peptidyl transferase center and thus would serve to optimize ribosomal fidelity. This chain is Dual-specificity RNA methyltransferase RlmN, found in Enterobacter sp. (strain 638).